Reading from the N-terminus, the 568-residue chain is Matrix metalloproteinase-21 (568 aa).

The first 24 residues, 1–24, serve as a signal peptide directing secretion; sequence MLAASVLRLTLPLCWLVAPQPTQP. Positions 25-143 are excised as a propeptide; that stretch reads ERLFHSRDRS…SLGLRPRARQ (119 aa). A Cysteine switch motif is present at residues 110-117; the sequence is PRCGVPDT. Cysteine 112 and histidine 282 together coordinate Zn(2+). The active site involves glutamate 283. Zn(2+)-binding residues include histidine 286 and histidine 292. The cysteines at positions 328 and 559 are disulfide-linked. 4 Hemopexin repeats span residues 329 to 388, 390 to 446, 447 to 495, and 502 to 558; these read KGSF…WRGI, TQSI…FPGI, PSPL…FPAI, and FRNL…WFDV. N-linked (GlcNAc...) asparagine glycosylation is present at asparagine 371.

The protein belongs to the peptidase M10A family. Zn(2+) is required as a cofactor. Ca(2+) serves as cofactor. The precursor is cleaved by a furin endopeptidase.

The protein localises to the secreted. Plays a specialized role in the generation of left-right asymmetry during embryogenesis. May act as a negative regulator of the NOTCH-signaling pathway. Cleaves alpha-1-antitrypsin. This is Matrix metalloproteinase-21 (Mmp21) from Mus musculus (Mouse).